Reading from the N-terminus, the 481-residue chain is uncharacterized protein (481 aa).

11 helical membrane-spanning segments follow: residues 14-34, 46-66, 90-110, 134-154, 167-187, 218-238, 258-278, 303-323, 377-397, 411-431, and 446-466; these read LGFCSVVMLGINSIIGAGIFL, FAPMAYVLAGIFAGVVAIVFA, IGIYVGVTHAITASIAWGVLA, FSVKTLTFLGFIGVLLAINLF, TVGKAFALSAFIVGGLWIITT, FSSMALATIVALYAFTGFESI, IAIFSVGAIYLLTLTVAMLLG, IIVVGALISMFGINVAASFGA, LAVIARFVQFIIVPIALIALA, AFTDKVLPLVAIVVSVGLAVS, and YFSIALIVITFIVVPAMAYLH.

This sequence belongs to the amino acid-polyamine-organocation (APC) superfamily.

It localises to the cell membrane. In terms of biological role, probable amino-acid or metabolite transport protein. This is an uncharacterized protein from Mycobacterium tuberculosis (strain CDC 1551 / Oshkosh).